Consider the following 232-residue polypeptide: 6-phosphogluconolactonase (232 aa).

This sequence belongs to the glucosamine/galactosamine-6-phosphate isomerase family. 6-phosphogluconolactonase subfamily.

The enzyme catalyses 6-phospho-D-glucono-1,5-lactone + H2O = 6-phospho-D-gluconate + H(+). The protein operates within carbohydrate degradation; pentose phosphate pathway; D-ribulose 5-phosphate from D-glucose 6-phosphate (oxidative stage): step 2/3. Hydrolysis of 6-phosphogluconolactone to 6-phosphogluconate. This chain is 6-phosphogluconolactonase (pgl), found in Rhizobium meliloti (strain 1021) (Ensifer meliloti).